The chain runs to 139 residues: Putative nickel-responsive regulator (139 aa).

Positions 79, 90, 92, and 98 each coordinate Ni(2+).

Belongs to the transcriptional regulatory CopG/NikR family. Ni(2+) is required as a cofactor.

Functionally, transcriptional regulator. The sequence is that of Putative nickel-responsive regulator from Geobacter sp. (strain M21).